Here is a 172-residue protein sequence, read N- to C-terminus: MKEEKKLLLREVEEKITASQGFILLRYLGFTATHSRSFRNNLSGVSAEFEVLKKKIFFKALETSGVEMDPEDSEGHLGVVFAYGDPVSAAKQVLDFNKQHNDSLVFLAGRIDNASLSGREVEAVAKLPSMKELRQQVVGLIAAPMSQVVGIMNSVLSGVVSCVDQKAEKTQE.

Belongs to the universal ribosomal protein uL10 family. As to quaternary structure, part of the ribosomal stalk of the 50S ribosomal subunit. The N-terminus interacts with L11 and the large rRNA to form the base of the stalk. The C-terminus forms an elongated spine to which L12 dimers bind in a sequential fashion forming a multimeric L10(L12)X complex.

Its function is as follows. Forms part of the ribosomal stalk, playing a central role in the interaction of the ribosome with GTP-bound translation factors. This is Large ribosomal subunit protein uL10 from Chlamydia trachomatis serovar L2 (strain ATCC VR-902B / DSM 19102 / 434/Bu).